The primary structure comprises 178 residues: Nicotinamide-nucleotide adenylyltransferase (178 aa).

This sequence belongs to the archaeal NMN adenylyltransferase family.

Its subcellular location is the cytoplasm. The enzyme catalyses beta-nicotinamide D-ribonucleotide + ATP + H(+) = diphosphate + NAD(+). The protein operates within cofactor biosynthesis; NAD(+) biosynthesis; NAD(+) from nicotinamide D-ribonucleotide: step 1/1. The protein is Nicotinamide-nucleotide adenylyltransferase of Pyrobaculum aerophilum (strain ATCC 51768 / DSM 7523 / JCM 9630 / CIP 104966 / NBRC 100827 / IM2).